An 80-amino-acid polypeptide reads, in one-letter code: Putative membrane protein insertion efficiency factor (80 aa).

The protein belongs to the UPF0161 family.

It localises to the cell inner membrane. In terms of biological role, could be involved in insertion of integral membrane proteins into the membrane. This Picosynechococcus sp. (strain ATCC 27264 / PCC 7002 / PR-6) (Agmenellum quadruplicatum) protein is Putative membrane protein insertion efficiency factor.